The following is a 144-amino-acid chain: Large ribosomal subunit protein uL16 (144 aa).

The protein belongs to the universal ribosomal protein uL16 family. In terms of assembly, part of the 50S ribosomal subunit.

In terms of biological role, binds 23S rRNA and is also seen to make contacts with the A and possibly P site tRNAs. The sequence is that of Large ribosomal subunit protein uL16 from Novosphingobium aromaticivorans (strain ATCC 700278 / DSM 12444 / CCUG 56034 / CIP 105152 / NBRC 16084 / F199).